The primary structure comprises 200 residues: MSKWAGIVLAGGMSSRFGEPKALASWQGSTFIEHILKVMTSALQEVVVISHSDIKERVEQFVQVPVIEDIPHYKGDGPLAGIVSGMEYIEADWYAIMPCDAPNVSQEWFTILLEQTSKEYDAVVPIINGRKQPLLAAYHNRVKEKIYALLQEEKRSMGQLLSQCNVKYIAGEDVQANADWFINVNTKEEYVQAQKDLSNE.

Residues 9-11 (LAG), lysine 21, aspartate 69, and aspartate 100 each bind GTP. Position 100 (aspartate 100) interacts with Mg(2+).

Belongs to the MobA family. Mg(2+) serves as cofactor.

The protein resides in the cytoplasm. It carries out the reaction Mo-molybdopterin + GTP + H(+) = Mo-molybdopterin guanine dinucleotide + diphosphate. Transfers a GMP moiety from GTP to Mo-molybdopterin (Mo-MPT) cofactor (Moco or molybdenum cofactor) to form Mo-molybdopterin guanine dinucleotide (Mo-MGD) cofactor. This chain is Probable molybdenum cofactor guanylyltransferase, found in Bacillus cereus (strain ATCC 10987 / NRS 248).